The sequence spans 197 residues: Signal peptidase complex catalytic subunit SEC11 (197 aa).

Residues 1 to 14 (MLSSLAPYMANPRQ) lie on the Cytoplasmic side of the membrane. The chain crosses the membrane as a helical; Signal-anchor for type II membrane protein span at residues 15 to 33 (TLTQVLNFALVLSTAFMLW). Residues 34–197 (KGLSVITNST…MGLMVVLQRE (164 aa)) lie on the Lumenal side of the membrane. A glycan (N-linked (GlcNAc...) asparagine) is linked at Asn-41. Catalysis depends on charge relay system residues Ser-53 and His-92. Residues 102-115 (PGREDKKNVKKGGE) are compositionally biased toward basic and acidic residues. The interval 102-134 (PGREDKKNVKKGGEEGEETSSTPSQKLLTKGDN) is disordered. Asp-139 functions as the Charge relay system in the catalytic mechanism. The interval 183-194 (VLLGFMGLMVVL) is C-terminal short (CTS) helix.

This sequence belongs to the peptidase S26B family. In terms of assembly, component of the signal peptidase complex (SPC) composed of a catalytic subunit SEC11 and three accessory subunits SPC1, SPC2 and SPC3. The complex induces a local thinning of the ER membrane which is used to measure the length of the signal peptide (SP) h-region of protein substrates. This ensures the selectivity of the complex towards h-regions shorter than 18-20 amino acids. SPC associates with the translocon complex.

Its subcellular location is the endoplasmic reticulum membrane. It catalyses the reaction Cleavage of hydrophobic, N-terminal signal or leader sequences from secreted and periplasmic proteins.. Functionally, catalytic component of the signal peptidase complex (SPC) which catalyzes the cleavage of N-terminal signal sequences from nascent proteins as they are translocated into the lumen of the endoplasmic reticulum. Specifically cleaves N-terminal signal peptides that contain a hydrophobic alpha-helix (h-region) shorter than 18-20 amino acids. The protein is Signal peptidase complex catalytic subunit SEC11 (SEC11) of Paracoccidioides brasiliensis (strain Pb18).